A 107-amino-acid polypeptide reads, in one-letter code: UPF0145 protein BT_3410 (107 aa).

The protein belongs to the UPF0145 family.

The polypeptide is UPF0145 protein BT_3410 (Bacteroides thetaiotaomicron (strain ATCC 29148 / DSM 2079 / JCM 5827 / CCUG 10774 / NCTC 10582 / VPI-5482 / E50)).